The sequence spans 161 residues: ATP synthase subunit b (161 aa).

Residues 10-29 (SVIQLMSFFLLLYILKKFLY) form a helical membrane-spanning segment.

The protein belongs to the ATPase B chain family. F-type ATPases have 2 components, F(1) - the catalytic core - and F(0) - the membrane proton channel. F(1) has five subunits: alpha(3), beta(3), gamma(1), delta(1), epsilon(1). F(0) has three main subunits: a(1), b(2) and c(10-14). The alpha and beta chains form an alternating ring which encloses part of the gamma chain. F(1) is attached to F(0) by a central stalk formed by the gamma and epsilon chains, while a peripheral stalk is formed by the delta and b chains.

The protein localises to the cell inner membrane. In terms of biological role, f(1)F(0) ATP synthase produces ATP from ADP in the presence of a proton or sodium gradient. F-type ATPases consist of two structural domains, F(1) containing the extramembraneous catalytic core and F(0) containing the membrane proton channel, linked together by a central stalk and a peripheral stalk. During catalysis, ATP synthesis in the catalytic domain of F(1) is coupled via a rotary mechanism of the central stalk subunits to proton translocation. Component of the F(0) channel, it forms part of the peripheral stalk, linking F(1) to F(0). The sequence is that of ATP synthase subunit b from Thermosipho melanesiensis (strain DSM 12029 / CIP 104789 / BI429).